The chain runs to 86 residues: Co-chaperonin GroES (86 aa).

This sequence belongs to the GroES chaperonin family. Heptamer of 7 subunits arranged in a ring. Interacts with the chaperonin GroEL.

The protein localises to the cytoplasm. Together with the chaperonin GroEL, plays an essential role in assisting protein folding. The GroEL-GroES system forms a nano-cage that allows encapsulation of the non-native substrate proteins and provides a physical environment optimized to promote and accelerate protein folding. GroES binds to the apical surface of the GroEL ring, thereby capping the opening of the GroEL channel. The sequence is that of Co-chaperonin GroES from Sulfurovum sp. (strain NBC37-1).